Here is a 292-residue protein sequence, read N- to C-terminus: Malonyl-S-ACP:biotin-protein carboxyltransferase MADD (292 aa).

The region spanning 1 to 281 is the CoA carboxyltransferase C-terminal domain; it reads MEIMMGQGRL…RGKVMAMMDK (281 aa).

It is found in the cytoplasm. The catalysed reaction is N(6)-biotinyl-L-lysyl-[protein] + malonyl-[ACP] = N(6)-carboxybiotinyl-L-lysyl-[protein] + acetyl-[ACP]. Gamma subunit of the biotin-dependent malonate decarboxylase multienzyme complex (EC 7.2.4.4). The two subunits MADC and MADD are required for the transfer of the malonate carboxy group from the acyl-carrier protein (ACP) to the prosthetic group of the biotin carrier MADF. Required for the regeneration of ACP. The chain is Malonyl-S-ACP:biotin-protein carboxyltransferase MADD (madD) from Malonomonas rubra.